The sequence spans 481 residues: Tryptophan 5-hydroxylase (481 aa).

One can recognise an ACT domain in the interval 56–131 (SVIFSLKNEI…NVISMSPPEN (76 aa)). L-tryptophan is bound by residues Tyr272, Arg294, and Thr302. Positions 309, 314, and 354 each coordinate Fe cation. The L-tryptophan site is built by Ser373 and Ile403.

This sequence belongs to the biopterin-dependent aromatic amino acid hydroxylase family. Homotetramer. Fe(2+) is required as a cofactor.

It carries out the reaction (6R)-L-erythro-5,6,7,8-tetrahydrobiopterin + L-tryptophan + O2 = 5-hydroxy-L-tryptophan + (4aS,6R)-4a-hydroxy-L-erythro-5,6,7,8-tetrahydrobiopterin. It functions in the pathway aromatic compound metabolism; serotonin biosynthesis; serotonin from L-tryptophan: step 1/2. Functionally, oxidizes L-tryptophan to 5-hydroxy-l-tryptophan in the rate-determining step of serotonin biosynthesis. This Xenopus laevis (African clawed frog) protein is Tryptophan 5-hydroxylase (tph1).